The primary structure comprises 1370 residues: DNA-directed RNA polymerase subunit beta (1370 aa).

This sequence belongs to the RNA polymerase beta chain family. In terms of assembly, the RNAP catalytic core consists of 2 alpha, 1 beta, 1 beta' and 1 omega subunit. When a sigma factor is associated with the core the holoenzyme is formed, which can initiate transcription.

It carries out the reaction RNA(n) + a ribonucleoside 5'-triphosphate = RNA(n+1) + diphosphate. Its function is as follows. DNA-dependent RNA polymerase catalyzes the transcription of DNA into RNA using the four ribonucleoside triphosphates as substrates. The polypeptide is DNA-directed RNA polymerase subunit beta (Bordetella bronchiseptica (strain ATCC BAA-588 / NCTC 13252 / RB50) (Alcaligenes bronchisepticus)).